The chain runs to 188 residues: Ribosome-recycling factor (188 aa).

This sequence belongs to the RRF family.

It is found in the cytoplasm. In terms of biological role, responsible for the release of ribosomes from messenger RNA at the termination of protein biosynthesis. May increase the efficiency of translation by recycling ribosomes from one round of translation to another. The polypeptide is Ribosome-recycling factor (Lawsonia intracellularis (strain PHE/MN1-00)).